The primary structure comprises 157 residues: SsrA-binding protein (157 aa).

The protein belongs to the SmpB family.

The protein localises to the cytoplasm. Its function is as follows. Required for rescue of stalled ribosomes mediated by trans-translation. Binds to transfer-messenger RNA (tmRNA), required for stable association of tmRNA with ribosomes. tmRNA and SmpB together mimic tRNA shape, replacing the anticodon stem-loop with SmpB. tmRNA is encoded by the ssrA gene; the 2 termini fold to resemble tRNA(Ala) and it encodes a 'tag peptide', a short internal open reading frame. During trans-translation Ala-aminoacylated tmRNA acts like a tRNA, entering the A-site of stalled ribosomes, displacing the stalled mRNA. The ribosome then switches to translate the ORF on the tmRNA; the nascent peptide is terminated with the 'tag peptide' encoded by the tmRNA and targeted for degradation. The ribosome is freed to recommence translation, which seems to be the essential function of trans-translation. The polypeptide is SsrA-binding protein (Clostridium kluyveri (strain NBRC 12016)).